The sequence spans 163 residues: Jun dimerization protein 2 (163 aa).

Disordered stretches follow at residues 1-20 and 58-89; these read MMPGQIPDPSVTTGSLPGLG and GKRPQPVKSELDEEEERRKRRREKNKVAAARC. Lys-65 participates in a covalent cross-link: Glycyl lysine isopeptide (Lys-Gly) (interchain with G-Cter in SUMO2). In terms of domain architecture, bZIP spans 72 to 135; sequence EERRKRRREK…QQLILMLNRH (64 aa). Residues 74–96 are basic motif; it reads RRKRRREKNKVAAARCRNKKKER. A leucine-zipper region spans residues 100–128; it reads LQRESERLELMNAELKTQIEELKQERQQL. Thr-148 carries the phosphothreonine; by MAPK8 modification.

This sequence belongs to the bZIP family. ATF subfamily. As to quaternary structure, forms a homodimer or heterodimer with JUN, JUNB, JUND, CEBPG and ATF2 thereby inhibiting transactivation by JUN, ATF2 and CEBPG. Binds multiple DNA elements such as cAMP-response element (CRE) and TPA response element (TRE) either as homodimer or heterodimer. Interacts with IRF2BP1. Phosphorylation of Thr-148 by MAPK8 in response to different stress conditions such as, UV irradiation, oxidatives stress and anisomycin treatments. Post-translationally, polyubiquitinated; probably by IRF2BP1.

It is found in the nucleus. Component of the AP-1 transcription factor that represses transactivation mediated by the Jun family of proteins. Involved in a variety of transcriptional responses associated with AP-1 such as UV-induced apoptosis, cell differentiation, tumorigenesis and antitumogeneris. Can also function as a repressor by recruiting histone deacetylase 3/HDAC3 to the promoter region of JUN. May control transcription via direct regulation of the modification of histones and the assembly of chromatin. The polypeptide is Jun dimerization protein 2 (JDP2) (Homo sapiens (Human)).